The following is a 121-amino-acid chain: Holin-like protein CidA (121 aa).

The next 4 helical transmembrane spans lie at 3-23, 30-50, 58-78, and 89-109; these read WWKLSGQILLLFCFAWTGEWI, PVPGSIIGIFLLLISLKFNLV, GADFLLKELILFFIPSAVAVI, and IDLILIIMISTLCVTLVTGLL.

The protein belongs to the CidA/LrgA family. CidA subfamily.

It is found in the cell membrane. Increases the activity of extracellular murein hydrolases possibly by mediating their export via hole formation. Inhibited by the antiholin-like proteins LrgAB. In an unstressed cell, the LrgAB products probably inhibit the function of the CidA protein. When a cell is stressed by the addition of antibiotics or by other factors in the environment, CidA possibly oligomerizes within the bacterial cell membrane, creating lesions that disrupt the proton motive force, which in turn results in loss of cell viability. These lesions are also hypothesized to regulate the subsequent cell lysis by either allowing the murein hydrolases access to the cell wall substrate and/or regulating their activity by a possible change in the cell wall pH that results from loss of membrane potential. The polypeptide is Holin-like protein CidA (Bacillus cereus (strain ATCC 10987 / NRS 248)).